A 185-amino-acid chain; its full sequence is MIKEVIVVEGRDDITAVKRAVDAEMIAVGGFGINSKIISKIKEAQKRRGVIVLTDPDFAGEKIRSIISKRVKGIKHARISQSEGTKNGDIGVENASPESIIRALNNAKCETQKKTYEFTIEDMLFFKLVGNSEAKKRRDLVGNELGIGYSNGAQFLSRLNNFGISKEELINAVNTVNRRYYDEGI.

A Toprim domain is found at 3–84 (KEVIVVEGRD…KHARISQSEG (82 aa)). Mg(2+) contacts are provided by E9, D55, and D57.

This sequence belongs to the ribonuclease M5 family. Requires Mg(2+) as cofactor.

The protein localises to the cytoplasm. The enzyme catalyses Endonucleolytic cleavage of RNA, removing 21 and 42 nucleotides, respectively, from the 5'- and 3'-termini of a 5S-rRNA precursor.. In terms of biological role, required for correct processing of both the 5' and 3' ends of 5S rRNA precursor. Cleaves both sides of a double-stranded region yielding mature 5S rRNA in one step. The protein is Ribonuclease M5 of Clostridium acetobutylicum (strain ATCC 824 / DSM 792 / JCM 1419 / IAM 19013 / LMG 5710 / NBRC 13948 / NRRL B-527 / VKM B-1787 / 2291 / W).